Reading from the N-terminus, the 309-residue chain is Chronophin (309 aa).

The active-site Nucleophile is aspartate 25. 2 residues coordinate Mg(2+): aspartate 25 and aspartate 27. Catalysis depends on aspartate 27, which acts as the Proton donor. Residues 58-60 (SNN), histidine 178, and lysine 209 each bind substrate. Aspartate 234 serves as a coordination point for Mg(2+).

Belongs to the HAD-like hydrolase superfamily. In terms of assembly, homodimer. Mg(2+) serves as cofactor.

It is found in the cytoplasm. It localises to the cytosol. Its subcellular location is the cytoskeleton. The protein localises to the cell projection. The protein resides in the ruffle membrane. It is found in the lamellipodium membrane. It localises to the cell membrane. The enzyme catalyses pyridoxal 5'-phosphate + H2O = pyridoxal + phosphate. It carries out the reaction pyridoxine 5'-phosphate + H2O = pyridoxine + phosphate. It catalyses the reaction pyridoxamine + phosphate = pyridoxamine 5'-phosphate + H2O. The catalysed reaction is O-phospho-L-seryl-[protein] + H2O = L-seryl-[protein] + phosphate. Functionally, functions as a pyridoxal phosphate (PLP) phosphatase, which also catalyzes the dephosphorylation of pyridoxine 5'-phosphate (PNP) and pyridoxamine 5'-phosphate (PMP), with order of substrate preference PLP &gt; PNP &gt; PMP and therefore plays a role in vitamin B6 metabolism. Also functions as a protein serine phosphatase that specifically dephosphorylates 'Ser-3' in proteins of the actin-depolymerizing factor (ADF)/cofilin family like CFL1 and DSTN. Thereby, regulates cofilin-dependent actin cytoskeleton reorganization, being required for normal progress through mitosis and normal cytokinesis. Does not dephosphorylate phosphothreonines in LIMK1. Does not dephosphorylate peptides containing phosphotyrosine. The polypeptide is Chronophin (Rattus norvegicus (Rat)).